Here is a 506-residue protein sequence, read N- to C-terminus: Lysine--tRNA ligase (506 aa).

Mg(2+) contacts are provided by glutamate 415 and glutamate 422.

This sequence belongs to the class-II aminoacyl-tRNA synthetase family. Homodimer. Mg(2+) serves as cofactor.

It localises to the cytoplasm. The catalysed reaction is tRNA(Lys) + L-lysine + ATP = L-lysyl-tRNA(Lys) + AMP + diphosphate. The polypeptide is Lysine--tRNA ligase (lysS) (Buchnera aphidicola subsp. Acyrthosiphon pisum (strain APS) (Acyrthosiphon pisum symbiotic bacterium)).